We begin with the raw amino-acid sequence, 197 residues long: Recombination protein RecR (197 aa).

The C4-type zinc finger occupies 56 to 71; the sequence is CQQCRNLSETEICGFC. The region spanning 79–174 is the Toprim domain; the sequence is DQLCIVETPT…SVTRLAQGIP (96 aa).

The protein belongs to the RecR family.

Functionally, may play a role in DNA repair. It seems to be involved in an RecBC-independent recombinational process of DNA repair. It may act with RecF and RecO. In Hydrogenovibrio crunogenus (strain DSM 25203 / XCL-2) (Thiomicrospira crunogena), this protein is Recombination protein RecR.